The chain runs to 510 residues: NAD(P)H-quinone oxidoreductase subunit 2 B, chloroplastic (510 aa).

13 helical membrane passes run 24–44, 57–77, 99–119, 124–144, 149–169, 183–203, 227–247, 295–315, 323–343, 354–374, 395–415, 418–438, and 484–504; these read LLLF…GLIL, IPWL…SLLF, IFQF…VEYI, MAIT…MFLC, LITI…LSGY, YLLM…WLYG, PGIS…LSPA, WHLL…LIAI, MLAY…IVGD, YMLF…LFGL, ALSL…AGFF, LYLF…IGLL, and MIVC…IIAI.

This sequence belongs to the complex I subunit 2 family. NDH is composed of at least 16 different subunits, 5 of which are encoded in the nucleus.

It localises to the plastid. It is found in the chloroplast thylakoid membrane. The enzyme catalyses a plastoquinone + NADH + (n+1) H(+)(in) = a plastoquinol + NAD(+) + n H(+)(out). It catalyses the reaction a plastoquinone + NADPH + (n+1) H(+)(in) = a plastoquinol + NADP(+) + n H(+)(out). Functionally, NDH shuttles electrons from NAD(P)H:plastoquinone, via FMN and iron-sulfur (Fe-S) centers, to quinones in the photosynthetic chain and possibly in a chloroplast respiratory chain. The immediate electron acceptor for the enzyme in this species is believed to be plastoquinone. Couples the redox reaction to proton translocation, and thus conserves the redox energy in a proton gradient. The chain is NAD(P)H-quinone oxidoreductase subunit 2 B, chloroplastic from Lactuca sativa (Garden lettuce).